We begin with the raw amino-acid sequence, 198 residues long: Glycerol-3-phosphate acyltransferase (198 aa).

Transmembrane regions (helical) follow at residues 1 to 21 (MILITSLAVLVSYLIGSIPAA), 52 to 72 (GPALLVAAFDILKGAIAVGLA), 81 to 101 (WTALCGVAAVLGHNFSPFLGF), 115 to 135 (LALDPVVGGGAFVVGVGCIWL), and 153 to 173 (LAAALARPGWLLLIVAFLAAL).

Belongs to the PlsY family. As to quaternary structure, probably interacts with PlsX.

It is found in the cell membrane. The enzyme catalyses an acyl phosphate + sn-glycerol 3-phosphate = a 1-acyl-sn-glycero-3-phosphate + phosphate. Its pathway is lipid metabolism; phospholipid metabolism. Functionally, catalyzes the transfer of an acyl group from acyl-phosphate (acyl-PO(4)) to glycerol-3-phosphate (G3P) to form lysophosphatidic acid (LPA). This enzyme utilizes acyl-phosphate as fatty acyl donor, but not acyl-CoA or acyl-ACP. In Deinococcus geothermalis (strain DSM 11300 / CIP 105573 / AG-3a), this protein is Glycerol-3-phosphate acyltransferase.